We begin with the raw amino-acid sequence, 552 residues long: CCR4-NOT transcription complex subunit 6 (552 aa).

4 LRR repeats span residues 52-73 (HLTA…IAKL), 75-96 (NLVY…LGNM), 98-120 (SLRE…GKLF), and 121-143 (QLQT…CLEP). The interval 153–552 (LLDNLSVSTE…VNGIHLPGRR (400 aa)) is nuclease domain. Residue Glu-235 participates in Mg(2+) binding. Residues Glu-235, Glu-271, His-356, and Pro-361 each coordinate substrate. Asp-407 lines the Mg(2+) pocket. The Proton donor/acceptor role is filled by Asp-407. The substrate site is built by Asn-409, Asn-476, and Phe-481.

The protein belongs to the CCR4/nocturin family. Subunit of the CCR4-NOT core complex. Requires Mg(2+) as cofactor.

The protein resides in the cytoplasm. The protein localises to the nucleus. The enzyme catalyses Exonucleolytic cleavage of poly(A) to 5'-AMP.. Its function is as follows. Poly(A) nuclease involved in mRNA decay. Has 3'-5' RNase activity. The CCR4-NOT complex functions as a general transcription regulation complex. Enhances ligand-dependent transcriptional activity of nuclear hormone receptors. The protein is CCR4-NOT transcription complex subunit 6 (cnot6) of Xenopus laevis (African clawed frog).